We begin with the raw amino-acid sequence, 185 residues long: Kunitz-type serine protease inhibitor DrTI (185 aa).

2 cysteine pairs are disulfide-bonded: Cys44/Cys89 and Cys139/Cys147.

This sequence belongs to the protease inhibitor I3 (leguminous Kunitz-type inhibitor) family.

Its subcellular location is the secreted. Functionally, inhibits bovine trypsin and human plasma kallikrein. This Delonix regia (Royal poinciana) protein is Kunitz-type serine protease inhibitor DrTI.